The following is a 418-amino-acid chain: Sterigmatocystin 8-O-methyltransferase (418 aa).

The propeptide occupies 1–41 (MTLPNKAALVGLAHTLSEQVKRYLVTADETKSPEDHKLCIE). Residue 170 to 176 (MRSAAYF) coordinates substrate. A substrate binding region spans residues 206-225 (LFDYYSTVDEVRGRRFDLGM). Residues 254-255 (GG), Asp-277, 297-298 (DI), and Arg-313 each bind S-adenosyl-L-methionine. The active-site Proton acceptor is the His-317.

This sequence belongs to the class I-like SAM-binding methyltransferase superfamily. Cation-independent O-methyltransferase family. COMT subfamily.

The catalysed reaction is sterigmatocystin + S-adenosyl-L-methionine = 8-O-methylsterigmatocystin + S-adenosyl-L-homocysteine + H(+). It catalyses the reaction dihydrosterigmatocystin + S-adenosyl-L-methionine = 8-O-methyldihydrosterigmatocystin + S-adenosyl-L-homocysteine + H(+). Its pathway is mycotoxin biosynthesis; aflatoxin biosynthesis. Involved in the conversion of sterigmatocystin to O-methylsterigmatocystin (OMST) and dihydrosterigmatocystin to dihydro-o-methylsterigmatocystin in the aflatoxin biosynthesis pathway. This chain is Sterigmatocystin 8-O-methyltransferase (omtA), found in Aspergillus flavus (strain ATCC 200026 / FGSC A1120 / IAM 13836 / NRRL 3357 / JCM 12722 / SRRC 167).